The following is a 249-amino-acid chain: MVSFDATEALTPYREGRGYGAILFDRERLRQADAGLFSPQRWGDRARPVDEGGRGGAWFVDAPFGHSVLRQYRRGGMAARVSRDQYLWKGAGRTRSFAEFRLMRELLKRKLPVPRPLAACYLREGLGYRAALLMERLENVRSLADHAQVAGRGAPWEDTGRLIARFHRAGLDHADLNAHNILFDAGGHGWLIDFDRGVLRIPATRWRERNLARLHRSLLKLRGNRTREDVDKDYERLHRAYELAWGRGY.

The active site involves D175.

Belongs to the protein kinase superfamily. KdkA/RfaP family.

It is found in the cell inner membrane. It carries out the reaction an alpha-Kdo-(2-&gt;6)-lipid IVA + ATP = a 4-O-phospho-alpha-Kdo-(2-&gt;6)-lipid IVA + ADP + H(+). The protein operates within bacterial outer membrane biogenesis; LPS core biosynthesis. Functionally, catalyzes the ATP-dependent phosphorylation of the 3-deoxy-D-manno-octulosonic acid (Kdo) residue in Kdo-lipid IV(A) at the 4-OH position. This chain is 3-deoxy-D-manno-octulosonic acid kinase, found in Xanthomonas campestris pv. campestris (strain 8004).